The primary structure comprises 37 residues: Somatostatin-37 (37 aa).

Residues 1 to 2 (AL) constitute a propeptide that is removed on maturation. A disulfide bridge links Cys26 with Cys37.

Belongs to the somatostatin family.

The protein localises to the secreted. In terms of biological role, somatostatin inhibits the release of somatotropin. In Petromyzon marinus (Sea lamprey), this protein is Somatostatin-37 (sst).